A 343-amino-acid polypeptide reads, in one-letter code: UDP-3-O-acylglucosamine N-acyltransferase (343 aa).

The active-site Proton acceptor is histidine 245.

It belongs to the transferase hexapeptide repeat family. LpxD subfamily. In terms of assembly, homotrimer.

It carries out the reaction a UDP-3-O-[(3R)-3-hydroxyacyl]-alpha-D-glucosamine + a (3R)-hydroxyacyl-[ACP] = a UDP-2-N,3-O-bis[(3R)-3-hydroxyacyl]-alpha-D-glucosamine + holo-[ACP] + H(+). Its pathway is bacterial outer membrane biogenesis; LPS lipid A biosynthesis. In terms of biological role, catalyzes the N-acylation of UDP-3-O-acylglucosamine using 3-hydroxyacyl-ACP as the acyl donor. Is involved in the biosynthesis of lipid A, a phosphorylated glycolipid that anchors the lipopolysaccharide to the outer membrane of the cell. The chain is UDP-3-O-acylglucosamine N-acyltransferase from Phenylobacterium zucineum (strain HLK1).